A 79-amino-acid chain; its full sequence is Cytochrome b (79 aa).

3 helical membrane-spanning segments follow: residues 1–7, 31–52, and 67–79; these read SALFLAM, WLIR…YLHI, and WNIG…LTMA. Heme b contacts are provided by histidine 37 and histidine 51.

This sequence belongs to the cytochrome b family. The cytochrome bc1 complex contains 11 subunits: 3 respiratory subunits (MT-CYB, CYC1 and UQCRFS1), 2 core proteins (UQCRC1 and UQCRC2) and 6 low-molecular weight proteins (UQCRH/QCR6, UQCRB/QCR7, UQCRQ/QCR8, UQCR10/QCR9, UQCR11/QCR10 and a cleavage product of UQCRFS1). This cytochrome bc1 complex then forms a dimer. Heme b serves as cofactor.

It is found in the mitochondrion inner membrane. In terms of biological role, component of the ubiquinol-cytochrome c reductase complex (complex III or cytochrome b-c1 complex) that is part of the mitochondrial respiratory chain. The b-c1 complex mediates electron transfer from ubiquinol to cytochrome c. Contributes to the generation of a proton gradient across the mitochondrial membrane that is then used for ATP synthesis. The chain is Cytochrome b (MT-CYB) from Dipodomys californicus (California kangaroo rat).